A 473-amino-acid polypeptide reads, in one-letter code: ATP synthase subunit beta (473 aa).

Residue 158 to 165 (GGAGVGKT) participates in ATP binding.

This sequence belongs to the ATPase alpha/beta chains family. As to quaternary structure, F-type ATPases have 2 components, CF(1) - the catalytic core - and CF(0) - the membrane proton channel. CF(1) has five subunits: alpha(3), beta(3), gamma(1), delta(1), epsilon(1). CF(0) has three main subunits: a(1), b(2) and c(9-12). The alpha and beta chains form an alternating ring which encloses part of the gamma chain. CF(1) is attached to CF(0) by a central stalk formed by the gamma and epsilon chains, while a peripheral stalk is formed by the delta and b chains.

The protein localises to the cell membrane. The enzyme catalyses ATP + H2O + 4 H(+)(in) = ADP + phosphate + 5 H(+)(out). Produces ATP from ADP in the presence of a proton gradient across the membrane. The catalytic sites are hosted primarily by the beta subunits. This Carboxydothermus hydrogenoformans (strain ATCC BAA-161 / DSM 6008 / Z-2901) protein is ATP synthase subunit beta.